The sequence spans 340 residues: Dihydroorotate dehydrogenase (quinone) (340 aa).

FMN-binding positions include 62-66 (AGMDK) and Thr86. Lys66 is a binding site for substrate. Position 111–115 (111–115 (NRMGF)) interacts with substrate. Positions 139 and 172 each coordinate FMN. Substrate is bound at residue Asn172. Ser175 acts as the Nucleophile in catalysis. Asn177 contacts substrate. Residues Lys217 and Thr245 each contribute to the FMN site. Position 246-247 (246-247 (NT)) interacts with substrate. FMN contacts are provided by residues Gly268, Gly297, and 318–319 (YS).

The protein belongs to the dihydroorotate dehydrogenase family. Type 2 subfamily. As to quaternary structure, monomer. FMN is required as a cofactor.

Its subcellular location is the cell membrane. It catalyses the reaction (S)-dihydroorotate + a quinone = orotate + a quinol. The protein operates within pyrimidine metabolism; UMP biosynthesis via de novo pathway; orotate from (S)-dihydroorotate (quinone route): step 1/1. Catalyzes the conversion of dihydroorotate to orotate with quinone as electron acceptor. The chain is Dihydroorotate dehydrogenase (quinone) from Shewanella woodyi (strain ATCC 51908 / MS32).